The chain runs to 260 residues: Histidine-binding periplasmic protein (260 aa).

Residues 1–22 form the signal peptide; the sequence is MKKLALSLSLVLAFSSATAAFA. An intrachain disulfide couples Cys-60 to Cys-67. Residues Ser-91, Ser-92, Ser-94, Arg-99, Thr-143, and Asp-183 each contribute to the L-histidine site.

The protein belongs to the bacterial solute-binding protein 3 family. As to quaternary structure, the complex is composed of two ATP-binding proteins (HisP), two transmembrane proteins (HisM and HisQ) and a solute-binding protein (HisJ).

It localises to the periplasm. Functionally, part of the ABC transporter complex HisPMQJ involved in histidine transport. Binds histidine. Interacts with HisQMP and stimulates ATPase activity of HisP, which results in histidine translocation. May have some additional function(s) in translocation that is independent of the stimulation of ATP hydrolysis. The protein is Histidine-binding periplasmic protein of Salmonella typhimurium (strain LT2 / SGSC1412 / ATCC 700720).